The sequence spans 486 residues: UDP-N-acetylmuramoyl-L-alanyl-D-glutamate--2,6-diaminopimelate ligase (486 aa).

S30 provides a ligand contact to UDP-N-acetyl-alpha-D-muramoyl-L-alanyl-D-glutamate. Position 112-118 (112-118) interacts with ATP; it reads GTNGKTT. UDP-N-acetyl-alpha-D-muramoyl-L-alanyl-D-glutamate contacts are provided by residues 154–155, S181, Q187, and R189; that span reads TT. K221 carries the N6-carboxylysine modification. Meso-2,6-diaminopimelate contacts are provided by residues R378, 402-405, G455, and E459; that span reads DNPR. The Meso-diaminopimelate recognition motif motif lies at 402–405; that stretch reads DNPR.

Belongs to the MurCDEF family. MurE subfamily. Requires Mg(2+) as cofactor. Post-translationally, carboxylation is probably crucial for Mg(2+) binding and, consequently, for the gamma-phosphate positioning of ATP.

It is found in the cytoplasm. The catalysed reaction is UDP-N-acetyl-alpha-D-muramoyl-L-alanyl-D-glutamate + meso-2,6-diaminopimelate + ATP = UDP-N-acetyl-alpha-D-muramoyl-L-alanyl-gamma-D-glutamyl-meso-2,6-diaminopimelate + ADP + phosphate + H(+). The protein operates within cell wall biogenesis; peptidoglycan biosynthesis. Functionally, catalyzes the addition of meso-diaminopimelic acid to the nucleotide precursor UDP-N-acetylmuramoyl-L-alanyl-D-glutamate (UMAG) in the biosynthesis of bacterial cell-wall peptidoglycan. This chain is UDP-N-acetylmuramoyl-L-alanyl-D-glutamate--2,6-diaminopimelate ligase, found in Cytophaga hutchinsonii (strain ATCC 33406 / DSM 1761 / CIP 103989 / NBRC 15051 / NCIMB 9469 / D465).